Here is a 170-residue protein sequence, read N- to C-terminus: Photosystem II extrinsic protein V (170 aa).

An N-terminal signal peptide occupies residues 1–33 (MASLFASLGRSLIKLLIVLPVIIGLSISSPAMA). Heme c contacts are provided by Cys-70, Cys-73, His-74, and His-125.

The protein belongs to the cytochrome c family. PsbV subfamily. PSII is composed of 1 copy each of membrane proteins PsbA, PsbB, PsbC, PsbD, PsbE, PsbF, PsbH, PsbI, PsbJ, PsbK, PsbL, PsbM, PsbT, PsbX, PsbY, Psb30/Ycf12, peripheral proteins PsbO, CyanoQ (PsbQ), PsbU, PsbV and a large number of cofactors. It forms dimeric complexes. The cofactor is heme c.

It localises to the cellular thylakoid membrane. In terms of biological role, one of the extrinsic, lumenal subunits of photosystem II (PSII). PSII is a light-driven water plastoquinone oxidoreductase, using light energy to abstract electrons from H(2)O, generating a proton gradient subsequently used for ATP formation. The extrinsic proteins stabilize the structure of photosystem II oxygen-evolving complex (OEC), the ion environment of oxygen evolution and protect the OEC against heat-induced inactivation. Low-potential cytochrome c that plays a role in the OEC of PSII. This is Photosystem II extrinsic protein V from Prochlorococcus marinus (strain MIT 9303).